Reading from the N-terminus, the 576-residue chain is MDAFATSPTTALFETVNCNAHVAPMAGEDSSENRPASNYKPSTWDYEFLQSLATTNNTVGEKHTRMADKLKEEVKSMMKGTMEPVAKLELINIVQRLGLKYRFESEIKEELFSLYKDGTDAWWVGNLHATALRFRLLRENGIFVPQDVFETFKDKSGEFKSQLCKDVRGLLSLYEASYLGWEGEELLDEAKKFSTTNLNNVKESISSNTLGRLVKHALNLPLHWSAARYEARWFIDEYEREENVIPNLLKYAKLDFNVVQSIHQKELGNLARWWVETGLDKLGFVRNTLMQNFMWGCAMAFEPQYGKVRDAAVKLGSLITMVDDVYDVYGTLEELEIFTDIVDRWDINGIDKLPRNISMIVLTMFNTANQISYDLLRDRGFNSIPHIAEAWATLCKTYLKEAKWYHSGYKPTLEEYLENGLVSISFVLSLVTAYLQTERLENLTYESAAYVNSVPPLVRYSGLLNRLYNDLGTSSAEIARGDTLKSIQCYMTQTGATEEVAREHIKGLVHEAWKGMNRCLFEQTPLAEPFVGFNVNTVRGSQFFYQHGDGYAVTESWTKDLSLSVLIHPIPLNEED.

(2E,6E)-farnesyl diphosphate-binding residues include arginine 286, aspartate 323, aspartate 327, arginine 466, and asparagine 469. The Mg(2+) site is built by aspartate 323 and aspartate 327. The short motif at 323–327 (DDVYD) is the DDXXD motif element. 3 residues coordinate Mg(2+): asparagine 469, threonine 473, and glutamate 477.

It belongs to the terpene synthase family. Tpsb subfamily. Mg(2+) serves as cofactor. It depends on Mn(2+) as a cofactor.

In terms of biological role, produces a mixture of beta-bisabolene and alpha-bisabolol, along with traces of alpha-bisabolene and farnesene isomers from (2E,6E)-farnesyl diphosphate in fragrance biosynthesis. The chain is Alpha-bisabolol synthase from Santalum spicatum (Australian sandalwood).